Here is a 664-residue protein sequence, read N- to C-terminus: Exoribonuclease 2 (664 aa).

Residues 193 to 521 (RIDMTHIPFV…INHRMLKALI (329 aa)) enclose the RNB domain. The S1 motif domain occupies 568–650 (QTLFTGEIFD…ENRSLVAKPT (83 aa)).

The protein belongs to the RNR ribonuclease family. RNase II subfamily.

The protein localises to the cytoplasm. It catalyses the reaction Exonucleolytic cleavage in the 3'- to 5'-direction to yield nucleoside 5'-phosphates.. In terms of biological role, involved in mRNA degradation. Hydrolyzes single-stranded polyribonucleotides processively in the 3' to 5' direction. In Vibrio vulnificus (strain CMCP6), this protein is Exoribonuclease 2.